The chain runs to 153 residues: 17.6 kDa class I heat shock protein (153 aa).

A sHSP domain is found at 38-153 (ETAAIVNARI…PMVKAIDISG (116 aa)).

The protein belongs to the small heat shock protein (HSP20) family. In terms of assembly, forms oligomeric structures.

Its subcellular location is the cytoplasm. This Helianthus annuus (Common sunflower) protein is 17.6 kDa class I heat shock protein (HSP17.6).